We begin with the raw amino-acid sequence, 428 residues long: Light-independent protochlorophyllide reductase subunit N (428 aa).

3 residues coordinate [4Fe-4S] cluster: cysteine 31, cysteine 56, and cysteine 117.

It belongs to the BchN/ChlN family. In terms of assembly, protochlorophyllide reductase is composed of three subunits; BchL, BchN and BchB. Forms a heterotetramer of two BchB and two BchN subunits. Requires [4Fe-4S] cluster as cofactor.

The enzyme catalyses chlorophyllide a + oxidized 2[4Fe-4S]-[ferredoxin] + 2 ADP + 2 phosphate = protochlorophyllide a + reduced 2[4Fe-4S]-[ferredoxin] + 2 ATP + 2 H2O. It participates in porphyrin-containing compound metabolism; bacteriochlorophyll biosynthesis (light-independent). In terms of biological role, component of the dark-operative protochlorophyllide reductase (DPOR) that uses Mg-ATP and reduced ferredoxin to reduce ring D of protochlorophyllide (Pchlide) to form chlorophyllide a (Chlide). This reaction is light-independent. The NB-protein (BchN-BchB) is the catalytic component of the complex. The protein is Light-independent protochlorophyllide reductase subunit N of Rhodopseudomonas palustris (strain HaA2).